A 617-amino-acid chain; its full sequence is Na(+)/H(+) antiporter NhaA 1 (617 aa).

Residues 1 to 433 are na(+)/H(+) antiporter NhaA; it reads MTVTEQTTAR…GWAIFRITDW (433 aa). 11 helical membrane-spanning segments follow: residues 33–53, 75–95, 113–133, 141–161, 171–191, 194–214, 234–254, 304–324, 340–360, 378–398, and 411–431; these read AAAL…SPWA, MTVK…IVGL, AVPV…FLAF, HAWG…LAII, LFLL…IAVF, DAIQ…LALV, VALY…ALLI, VGPA…AGVL, WGVV…ATWL, IAGG…IVDI, and IGVL…FRIT. One can recognise a Thioredoxin domain in the interval 434-617; the sequence is LSPPEPVGLK…LIRALEAGRR (184 aa).

In the N-terminal section; belongs to the NhaA Na(+)/H(+) (TC 2.A.33) antiporter family.

The protein localises to the cell membrane. The catalysed reaction is Na(+)(in) + 2 H(+)(out) = Na(+)(out) + 2 H(+)(in). In terms of biological role, na(+)/H(+) antiporter that extrudes sodium in exchange for external protons. This is Na(+)/H(+) antiporter NhaA 1 from Mycolicibacterium vanbaalenii (strain DSM 7251 / JCM 13017 / BCRC 16820 / KCTC 9966 / NRRL B-24157 / PYR-1) (Mycobacterium vanbaalenii).